Reading from the N-terminus, the 406-residue chain is NAC transcription factor NAM-B1 (406 aa).

The segment covering 1 to 11 (MGSPDSSSGSA) has biased composition (polar residues). Positions 1-40 (MGSPDSSSGSAQKPPRHQHQHQPPPPRRQGSAPELPPGFR) are disordered. Residues 35–204 (LPPGFRFHPT…DWVLCRIYKK (170 aa)) form the NAC domain. The DNA-binding element occupies 137–210 (VGVKKALVFY…IYKKTSKAAA (74 aa)).

Its subcellular location is the nucleus. Functionally, transcription factor of the NAC family associated with the grain protein content (GPC). Sequences of the 11 European varieties of H.vulgare tested belongs to the same haplotype while the sequence found in H.spontaneum, an ancestor of the cultivated H.vulgare which has a higher GPC, belongs to an other haplotype. This Hordeum vulgare subsp. spontaneum (Wild barley) protein is NAC transcription factor NAM-B1 (NAM-B1).